Reading from the N-terminus, the 278-residue chain is Putative transposase for insertion sequence element IS986/IS6110 (278 aa).

The Integrase catalytic domain occupies 101 to 268; it reads GPPAPNRLWV…VPPVELEAAY (168 aa).

Its function is as follows. Involved in the transposition of the insertion sequence. In Mycobacterium bovis (strain ATCC BAA-935 / AF2122/97), this protein is Putative transposase for insertion sequence element IS986/IS6110.